A 196-amino-acid polypeptide reads, in one-letter code: Probable malonic semialdehyde reductase RutE (196 aa).

The protein belongs to the nitroreductase family. HadB/RutE subfamily. The cofactor is FMN.

The catalysed reaction is 3-hydroxypropanoate + NADP(+) = 3-oxopropanoate + NADPH + H(+). Its function is as follows. May reduce toxic product malonic semialdehyde to 3-hydroxypropionic acid, which is excreted. The sequence is that of Probable malonic semialdehyde reductase RutE from Escherichia coli O139:H28 (strain E24377A / ETEC).